Here is a 179-residue protein sequence, read N- to C-terminus: Large ribosomal subunit protein uL5 (179 aa).

It belongs to the universal ribosomal protein uL5 family. In terms of assembly, part of the 50S ribosomal subunit; part of the 5S rRNA/L5/L18/L25 subcomplex. Contacts the 5S rRNA and the P site tRNA. Forms a bridge to the 30S subunit in the 70S ribosome.

This is one of the proteins that bind and probably mediate the attachment of the 5S RNA into the large ribosomal subunit, where it forms part of the central protuberance. In the 70S ribosome it contacts protein S13 of the 30S subunit (bridge B1b), connecting the 2 subunits; this bridge is implicated in subunit movement. Contacts the P site tRNA; the 5S rRNA and some of its associated proteins might help stabilize positioning of ribosome-bound tRNAs. This is Large ribosomal subunit protein uL5 from Shewanella pealeana (strain ATCC 700345 / ANG-SQ1).